An 814-amino-acid polypeptide reads, in one-letter code: Probable G-protein coupled receptor 156 (814 aa).

At 1-47 (MEPEINCSELCDSFPGQELDRRPLHDLCKTTITSSHHSSKTISSLSP) the chain is on the extracellular side. The N-linked (GlcNAc...) asparagine glycan is linked to asparagine 6. A helical membrane pass occupies residues 48 to 68 (VLLGIVWTFLSCGLLLILFFL). Over 69 to 86 (AFTIHCRKNRIVKMSSPN) the chain is Cytoplasmic. Residues 87-107 (LNIVTLLGSCLTYSSAYLFGI) traverse the membrane as a helical segment. Residues 108-118 (QDVLVGSSMET) are Extracellular-facing. Residues 119-139 (LIQTRLSMLCIGTSLVFGPIL) traverse the membrane as a helical segment. The Cytoplasmic segment spans residues 140 to 164 (GKSWRLYKVFTQRVPDKRVIIKDLQ). The helical transmembrane segment at 165–185 (LLGLVAALLMADVILLMTWVL) threads the bilayer. Topologically, residues 186–222 (TDPIQCLQILSVSMTVTGKDVSCTSTSTHFCASRYSD) are extracellular. Residues 223-243 (VWIALIWGCKGLLLLYGAYLA) traverse the membrane as a helical segment. Topologically, residues 244 to 257 (GLTGHVSSPPVNQS) are cytoplasmic. The helical transmembrane segment at 258–278 (LTIMVGVNLLVLAAGLLFVVT) threads the bilayer. The Extracellular portion of the chain corresponds to 279-288 (RYLHSWPNLV). A helical membrane pass occupies residues 289–309 (FGLTSGGIFVCTTTINCFIFI). Residues 310–814 (PQLKQWKAFE…FKDDLKPTLV (505 aa)) are Cytoplasmic-facing. A coiled-coil region spans residues 354–390 (EKSSMERLLTEKNAVIESLQEQVNNAKEKIVRLMSAE). 3 disordered regions span residues 422 to 545 (AQGP…SSVI), 557 to 724 (GLGP…PEQW), and 769 to 792 (SSSDSSDSGTSDTDPEPTGGLASW). Positions 443-454 (SQCTSGPSSYAQ) are enriched in polar residues. The segment covering 468-484 (GKEEKISDSKDFSDHLD) has biased composition (basic and acidic residues). Polar residues predominate over residues 486 to 496 (GCSQKPWTEQS). Residues 523-545 (QRQRHLENSEEPPERRSRVSSVI) are compositionally biased toward basic and acidic residues. Polar residues predominate over residues 563-581 (SLSTAPSCHQQTWKNSAAF). Positions 599–610 (VRRRRAAQRARS) are enriched in basic residues. Over residues 639–651 (NGDSPSLAPQTTD) the composition is skewed to polar residues. A compositionally biased stretch (low complexity) spans 769–780 (SSSDSSDSGTSD).

This sequence belongs to the G-protein coupled receptor 3 family. GABA-B receptor subfamily. In terms of tissue distribution, ubiquitous expression both in the CNS and in peripheral tissues. Very high expression in fetal brain and testis relative to expression in other tissues.

The protein resides in the cell membrane. Orphan G-protein coupled receptor involved in the regulation of hair cell orientation in mechanosensory organs of the inner ear. It is required to trigger a 180 degree reversal in hair cell orientation, creating a virtual line of polarity reversal (LPR) across which stereociliary bundles are arranged in opposite orientations. This chain is Probable G-protein coupled receptor 156 (GPR156), found in Homo sapiens (Human).